Reading from the N-terminus, the 275-residue chain is MSPRITLNDGNSIPQVGLGVWQTPAEDTERAVAAALQAGYRHIDTAAAYRNETETGRAIANSGVPREDIFLVTKLWNSDQGYDATLAAFDASVQRLGVDYLDLYLIHWPVPENNKFVDTFKAFAHLRDQGRIRSIGVSNFEPEHLTTLIEETGIVPAVNQIELHPLLPQQELRDVHAKLGIATEAWSPLGQGSLLADPVITGIAEQHGKTPAQVLIRWHIQLGNIVIPKSVNPERIASNFDVFDFELSGQDITSIASLETGKRLGPDPRTFNFTG.

Tyrosine 49 functions as the Proton donor in the catalytic mechanism. NADPH-binding residues include leucine 189, isoleucine 227, lysine 229, serine 230, valine 231, arginine 235, serine 238, and asparagine 239. An Isoglutamyl lysine isopeptide (Lys-Gln) (interchain with Q-Cter in protein Pup) cross-link involves residue lysine 262.

The protein belongs to the aldo/keto reductase family.

In Mycolicibacterium smegmatis (strain ATCC 700084 / mc(2)155) (Mycobacterium smegmatis), this protein is Aldo-keto reductase MSMEG_2408/MSMEI_2347.